The sequence spans 210 residues: Protein-methionine-sulfoxide reductase heme-binding subunit MsrQ (210 aa).

6 helical membrane passes run 8-28, 37-57, 75-95, 110-130, 147-167, and 169-189; these read LAVF…AWIF, VLVE…LAMT, LGLW…LFIL, PYII…VTSN, LVYV…RADL, and EWAL…PMIA.

The protein belongs to the MsrQ family. Heterodimer of a catalytic subunit (MsrP) and a heme-binding subunit (MsrQ). Requires FMN as cofactor. It depends on heme b as a cofactor.

Its subcellular location is the cell inner membrane. Functionally, part of the MsrPQ system that repairs oxidized periplasmic proteins containing methionine sulfoxide residues (Met-O), using respiratory chain electrons. Thus protects these proteins from oxidative-stress damage caused by reactive species of oxygen and chlorine generated by the host defense mechanisms. MsrPQ is essential for the maintenance of envelope integrity under bleach stress, rescuing a wide series of structurally unrelated periplasmic proteins from methionine oxidation. MsrQ provides electrons for reduction to the reductase catalytic subunit MsrP, using the quinone pool of the respiratory chain. The polypeptide is Protein-methionine-sulfoxide reductase heme-binding subunit MsrQ (Pseudomonas syringae pv. tomato (strain ATCC BAA-871 / DC3000)).